Reading from the N-terminus, the 179-residue chain is Large ribosomal subunit protein uL5 (179 aa).

Belongs to the universal ribosomal protein uL5 family. In terms of assembly, part of the 50S ribosomal subunit; part of the 5S rRNA/L5/L18/L25 subcomplex. Contacts the 5S rRNA and the P site tRNA. Forms a bridge to the 30S subunit in the 70S ribosome.

This is one of the proteins that bind and probably mediate the attachment of the 5S RNA into the large ribosomal subunit, where it forms part of the central protuberance. In the 70S ribosome it contacts protein S13 of the 30S subunit (bridge B1b), connecting the 2 subunits; this bridge is implicated in subunit movement. Contacts the P site tRNA; the 5S rRNA and some of its associated proteins might help stabilize positioning of ribosome-bound tRNAs. The sequence is that of Large ribosomal subunit protein uL5 from Rickettsia prowazekii (strain Madrid E).